The primary structure comprises 264 residues: Thymidylate synthase (264 aa).

Arg21 contributes to the dUMP binding site. Residue His51 participates in (6R)-5,10-methylene-5,6,7,8-tetrahydrofolate binding. Residue 126 to 127 (RR) participates in dUMP binding. Cys146 acts as the Nucleophile in catalysis. Residues 166–169 (RSAD), Asn177, and 207–209 (HLY) contribute to the dUMP site. Asp169 is a (6R)-5,10-methylene-5,6,7,8-tetrahydrofolate binding site. Ala263 contacts (6R)-5,10-methylene-5,6,7,8-tetrahydrofolate.

The protein belongs to the thymidylate synthase family. Bacterial-type ThyA subfamily. In terms of assembly, homodimer.

The protein resides in the cytoplasm. It catalyses the reaction dUMP + (6R)-5,10-methylene-5,6,7,8-tetrahydrofolate = 7,8-dihydrofolate + dTMP. Its pathway is pyrimidine metabolism; dTTP biosynthesis. In terms of biological role, catalyzes the reductive methylation of 2'-deoxyuridine-5'-monophosphate (dUMP) to 2'-deoxythymidine-5'-monophosphate (dTMP) while utilizing 5,10-methylenetetrahydrofolate (mTHF) as the methyl donor and reductant in the reaction, yielding dihydrofolate (DHF) as a by-product. This enzymatic reaction provides an intracellular de novo source of dTMP, an essential precursor for DNA biosynthesis. In Pseudomonas aeruginosa (strain LESB58), this protein is Thymidylate synthase.